The primary structure comprises 386 residues: Flap endonuclease 1 (386 aa).

The segment at 1 to 104 (MGILGLSKLI…GELAKRAERR (104 aa)) is N-domain. Asp34 contributes to the Mg(2+) binding site. The DNA site is built by Arg47 and Arg70. Positions 86, 158, 160, 179, and 181 each coordinate Mg(2+). The segment at 122-253 (EIEKFNRRLV…KRAIELINNY (132 aa)) is I-domain. Glu158 serves as a coordination point for DNA. DNA-binding residues include Gly231 and Asp233. Residue Asp233 coordinates Mg(2+). Residues 336-344 (TQVRLDSFF) form an interaction with PCNA region. The interval 354–386 (VNAAKRKAEEAKKSANNKKAKTSGGAARGRRPK) is disordered.

Belongs to the XPG/RAD2 endonuclease family. FEN1 subfamily. In terms of assembly, interacts with PCNA. Three molecules of FEN1 bind to one PCNA trimer with each molecule binding to one PCNA monomer. PCNA stimulates the nuclease activity without altering cleavage specificity. The cofactor is Mg(2+). Phosphorylated. Phosphorylation upon DNA damage induces relocalization to the nuclear plasma.

It localises to the nucleus. The protein localises to the nucleolus. It is found in the nucleoplasm. Its subcellular location is the mitochondrion. In terms of biological role, structure-specific nuclease with 5'-flap endonuclease and 5'-3' exonuclease activities involved in DNA replication and repair. During DNA replication, cleaves the 5'-overhanging flap structure that is generated by displacement synthesis when DNA polymerase encounters the 5'-end of a downstream Okazaki fragment. It enters the flap from the 5'-end and then tracks to cleave the flap base, leaving a nick for ligation. Also involved in the long patch base excision repair (LP-BER) pathway, by cleaving within the apurinic/apyrimidinic (AP) site-terminated flap. Acts as a genome stabilization factor that prevents flaps from equilibrating into structures that lead to duplications and deletions. Also possesses 5'-3' exonuclease activity on nicked or gapped double-stranded DNA, and exhibits RNase H activity. Also involved in replication and repair of rDNA and in repairing mitochondrial DNA. The sequence is that of Flap endonuclease 1 from Drosophila pseudoobscura pseudoobscura (Fruit fly).